The primary structure comprises 558 residues: Serine palmitoyltransferase 1 (558 aa).

The Lumenal portion of the chain corresponds to 1–49 (MAHIPEVLPKSIPIPAFIVTTSSYLWYYFNLVLTQIPGGQFIVSYIKKS). A helical membrane pass occupies residues 50–84 (HHDDPYRTTVEIGLILYGIIYYLSKPQQKKSLQAQ). Over 85–341 (KPNLSPQEID…GRGLSEHFNM (257 aa)) the chain is Cytoplasmic. Position 121 is a phosphothreonine (Thr-121). The helical transmembrane segment at 342–371 (DRATAIDITVGSMATALGSTGGFVLGDSVM) threads the bilayer. Residues 372 to 424 (CLHQRIGSNAYCFSACLPAYTVTSVSKVLKLMDSNNDAVQTLQKLSKSLHDSF) lie on the Lumenal side of the membrane. A helical transmembrane segment spans residues 425 to 457 (ASDDSLRSYVIVTSSPVSAVLHLQLTPAYRSRK). The Cytoplasmic portion of the chain corresponds to 458–558 (FGYTCEQLFE…ILACCQESNK (101 aa)).

It belongs to the class-II pyridoxal-phosphate-dependent aminotransferase family. In terms of assembly, LCB1 and LCB2 encode essential subunits of the enzyme and form a heterodimer. Component of the SPOTS complex, at least composed of LCB1/2 (LCB1 and/or LCB2), ORM1/2 (ORM1 and/or ORM2), SAC1 and TSC3. Interacts with LCB2 and TSC3. It depends on pyridoxal 5'-phosphate as a cofactor.

It localises to the cytoplasm. The protein resides in the endoplasmic reticulum membrane. It carries out the reaction L-serine + hexadecanoyl-CoA + H(+) = 3-oxosphinganine + CO2 + CoA. The protein operates within lipid metabolism; sphingolipid metabolism. Component of serine palmitoyltransferase (SPT), which catalyzes the committed step in the synthesis of sphingolipids, the condensation of serine with palmitoyl CoA to form the long chain base 3-ketosphinganine. The sequence is that of Serine palmitoyltransferase 1 (LCB1) from Saccharomyces cerevisiae (strain ATCC 204508 / S288c) (Baker's yeast).